The sequence spans 1049 residues: Multiple C2 domain and transmembrane region protein 16 (1049 aa).

Positions 1–112 constitute a C2 1 domain; the sequence is MATTRKLVVE…VGQGEEALIY (112 aa). The tract at residues 136–249 is disordered; it reads DEKPPPLKPT…PPQNQPDGED (114 aa). Basic and acidic residues-rich tracts occupy residues 153–170 and 226–238; these read VEEK…ESKP and ESDK…KPVE. 3 consecutive C2 domains span residues 302 to 426, 460 to 582, and 617 to 745; these read TSEI…PQWY, TAGN…SRWL, and VCSD…RNTY. Ca(2+)-binding residues include S338, D390, T393, and S398. 2 helical membrane passes run 883–903 and 989–1009; these read VMLI…LFVI and ATGI…LVPT.

The protein belongs to the MCTP family. It depends on Ca(2+) as a cofactor. As to expression, expressed in the vascular tissues of roots, cotyledons and rosette leaves. Accumulates in roots meristems and shoot apical meristems (SAMs). Observed in flowers.

It localises to the endoplasmic reticulum membrane. Functionally, may function as a signaling molecule by regulating the trafficking of other regulators. This chain is Multiple C2 domain and transmembrane region protein 16, found in Arabidopsis thaliana (Mouse-ear cress).